Reading from the N-terminus, the 157-residue chain is Probable succinate transporter subunit YjjB (157 aa).

4 helical membrane passes run 10 to 30 (LAQDMALAAIPAVGFAMVFNV), 55 to 75 (AGFNIEWATFLAALLVGSIGI), 87 to 107 (IFTVAAVIPMFPGISAYTAMI), and 129 to 149 (FLKASSIVGALSIGLSIPGLW).

It belongs to the ThrE exporter (TC 2.A.79) family. As to quaternary structure, the transporter is composed of YjjB and YjjP.

Its subcellular location is the cell inner membrane. In terms of biological role, involved in succinate export with YjjP. Both proteins are required for export. Participates in succinate export, but also in the export of other dicarboxylates, such as fumarate and malate. Contributes to succinate production under both aerobic and anaerobic conditions, and increases fumarate and malate production during anaerobic succinate production. The polypeptide is Probable succinate transporter subunit YjjB (Klebsiella aerogenes (strain ATCC 13048 / DSM 30053 / CCUG 1429 / JCM 1235 / KCTC 2190 / NBRC 13534 / NCIMB 10102 / NCTC 10006 / CDC 819-56) (Enterobacter aerogenes)).